We begin with the raw amino-acid sequence, 186 residues long: Ribosome-recycling factor (186 aa).

This sequence belongs to the RRF family.

Its subcellular location is the cytoplasm. Responsible for the release of ribosomes from messenger RNA at the termination of protein biosynthesis. May increase the efficiency of translation by recycling ribosomes from one round of translation to another. This Chlorobium luteolum (strain DSM 273 / BCRC 81028 / 2530) (Pelodictyon luteolum) protein is Ribosome-recycling factor.